The following is a 314-amino-acid chain: DNA-directed RNA polymerase subunit alpha (314 aa).

Positions 1 to 228 are alpha N-terminal domain (alpha-NTD); it reads MIEFEKPKIH…EHLAIFVNLN (228 aa). The alpha C-terminal domain (alpha-CTD) stretch occupies residues 245–314; that stretch reads KEKMLEMTIE…LLGLGFRSED (70 aa).

It belongs to the RNA polymerase alpha chain family. As to quaternary structure, homodimer. The RNAP catalytic core consists of 2 alpha, 1 beta, 1 beta' and 1 omega subunit. When a sigma factor is associated with the core the holoenzyme is formed, which can initiate transcription.

The catalysed reaction is RNA(n) + a ribonucleoside 5'-triphosphate = RNA(n+1) + diphosphate. Functionally, DNA-dependent RNA polymerase catalyzes the transcription of DNA into RNA using the four ribonucleoside triphosphates as substrates. This chain is DNA-directed RNA polymerase subunit alpha, found in Pediococcus pentosaceus (strain ATCC 25745 / CCUG 21536 / LMG 10740 / 183-1w).